Here is a 129-residue protein sequence, read N- to C-terminus: LEM domain-containing protein 1 (129 aa).

The LEM domain occupies 1–45 (MVDVKCLSDYELHKHLMKLGFTPGPILPSTRKTYEKKLVQLLASP). A disordered region spans residues 45–129 (PPWKPPVMKR…RAPRTTSHGA (85 aa)). A compositionally biased stretch (basic and acidic residues) spans 83-97 (SLKKTTLDATRDPRA).

This is LEM domain-containing protein 1 (Lemd1) from Mus musculus (Mouse).